We begin with the raw amino-acid sequence, 159 residues long: SsrA-binding protein (159 aa).

The protein belongs to the SmpB family.

It is found in the cytoplasm. Its function is as follows. Required for rescue of stalled ribosomes mediated by trans-translation. Binds to transfer-messenger RNA (tmRNA), required for stable association of tmRNA with ribosomes. tmRNA and SmpB together mimic tRNA shape, replacing the anticodon stem-loop with SmpB. tmRNA is encoded by the ssrA gene; the 2 termini fold to resemble tRNA(Ala) and it encodes a 'tag peptide', a short internal open reading frame. During trans-translation Ala-aminoacylated tmRNA acts like a tRNA, entering the A-site of stalled ribosomes, displacing the stalled mRNA. The ribosome then switches to translate the ORF on the tmRNA; the nascent peptide is terminated with the 'tag peptide' encoded by the tmRNA and targeted for degradation. The ribosome is freed to recommence translation, which seems to be the essential function of trans-translation. This chain is SsrA-binding protein, found in Actinobacillus pleuropneumoniae serotype 5b (strain L20).